A 171-amino-acid chain; its full sequence is Protein BTG1 (171 aa).

Ser159 is subject to Phosphoserine.

It belongs to the BTG family. Interacts with CNOT7 and CNOT8.

In terms of biological role, anti-proliferative protein. The sequence is that of Protein BTG1 (BTG1) from Homo sapiens (Human).